Here is a 312-residue protein sequence, read N- to C-terminus: Methionyl-tRNA formyltransferase (312 aa).

109-112 contacts (6S)-5,6,7,8-tetrahydrofolate; sequence SLLP.

It belongs to the Fmt family.

The enzyme catalyses L-methionyl-tRNA(fMet) + (6R)-10-formyltetrahydrofolate = N-formyl-L-methionyl-tRNA(fMet) + (6S)-5,6,7,8-tetrahydrofolate + H(+). Functionally, attaches a formyl group to the free amino group of methionyl-tRNA(fMet). The formyl group appears to play a dual role in the initiator identity of N-formylmethionyl-tRNA by promoting its recognition by IF2 and preventing the misappropriation of this tRNA by the elongation apparatus. This chain is Methionyl-tRNA formyltransferase, found in Listeria monocytogenes serotype 4a (strain HCC23).